The chain runs to 211 residues: Ribonuclease HII (211 aa).

The 191-residue stretch at S21–I211 folds into the RNase H type-2 domain. Residues D27, E28, and D122 each coordinate a divalent metal cation.

This sequence belongs to the RNase HII family. It depends on Mn(2+) as a cofactor. Mg(2+) serves as cofactor.

Its subcellular location is the cytoplasm. It catalyses the reaction Endonucleolytic cleavage to 5'-phosphomonoester.. Its function is as follows. Endonuclease that specifically degrades the RNA of RNA-DNA hybrids. The protein is Ribonuclease HII of Dehalococcoides mccartyi (strain ATCC BAA-2266 / KCTC 15142 / 195) (Dehalococcoides ethenogenes (strain 195)).